The chain runs to 175 residues: Small ribosomal subunit protein uS9 (175 aa).

It belongs to the universal ribosomal protein uS9 family.

The protein is Small ribosomal subunit protein uS9 of Streptomyces griseus subsp. griseus (strain JCM 4626 / CBS 651.72 / NBRC 13350 / KCC S-0626 / ISP 5235).